The sequence spans 598 residues: Arginine--tRNA ligase (598 aa).

The short motif at 131–141 (ANPTGPMHVGH) is the 'HIGH' region element. A disordered region spans residues 288-309 (KLPPPKSKKGQPPPQPQPDEEG).

This sequence belongs to the class-I aminoacyl-tRNA synthetase family. Monomer.

The protein localises to the cytoplasm. The catalysed reaction is tRNA(Arg) + L-arginine + ATP = L-arginyl-tRNA(Arg) + AMP + diphosphate. The polypeptide is Arginine--tRNA ligase (Anaeromyxobacter dehalogenans (strain 2CP-1 / ATCC BAA-258)).